The sequence spans 126 residues: Fluoride-specific ion channel FluC (126 aa).

Transmembrane regions (helical) follow at residues 2 to 22 (LITV…RYLI), 37 to 57 (VGVL…VVLA), 65 to 85 (LSPF…AFSL), and 99 to 119 (AALY…LGMM). Na(+)-binding residues include glycine 75 and threonine 78.

The protein belongs to the fluoride channel Fluc/FEX (TC 1.A.43) family.

It is found in the cell inner membrane. The enzyme catalyses fluoride(in) = fluoride(out). Na(+) is not transported, but it plays an essential structural role and its presence is essential for fluoride channel function. Its function is as follows. Fluoride-specific ion channel. Important for reducing fluoride concentration in the cell, thus reducing its toxicity. The protein is Fluoride-specific ion channel FluC of Ruegeria sp. (strain TM1040) (Silicibacter sp.).